Reading from the N-terminus, the 413-residue chain is Gamma-glutamyl phosphate reductase (413 aa).

The protein belongs to the gamma-glutamyl phosphate reductase family.

The protein localises to the cytoplasm. The enzyme catalyses L-glutamate 5-semialdehyde + phosphate + NADP(+) = L-glutamyl 5-phosphate + NADPH + H(+). It participates in amino-acid biosynthesis; L-proline biosynthesis; L-glutamate 5-semialdehyde from L-glutamate: step 2/2. Functionally, catalyzes the NADPH-dependent reduction of L-glutamate 5-phosphate into L-glutamate 5-semialdehyde and phosphate. The product spontaneously undergoes cyclization to form 1-pyrroline-5-carboxylate. The polypeptide is Gamma-glutamyl phosphate reductase (Alkaliphilus oremlandii (strain OhILAs) (Clostridium oremlandii (strain OhILAs))).